The primary structure comprises 170 residues: Protein FAM209 (170 aa).

The signal sequence occupies residues 1–20; that stretch reads MRTLLRWCLFLSLCVSCACA. Residues 56–76 traverse the membrane as a helical segment; sequence WLGNKWLWLFVAIMIYVMLKF. The segment at 83-107 is disordered; it reads KEQHPPGLRGCQLRSPPKKAQNISP.

Interacts with DPY19L2. Interacts with CYLC1; the interaction may be relevant for proper acrosome attachment to the nuclear envelope. In terms of tissue distribution, predominately expressed in testis.

It is found in the nucleus inner membrane. In terms of biological role, required for sperm acrosome biogenesis. This is Protein FAM209 from Mus musculus (Mouse).